The sequence spans 397 residues: Galactokinase (397 aa).

The disordered stretch occupies residues 1-27 (MGEAVGEPSASGSGSCTGRSRRGCGRR). The segment covering 9-18 (SASGSGSCTG) has biased composition (low complexity). 36–39 (EHTD) provides a ligand contact to substrate. Residues Ser69 and 124–130 (GAGLSSS) each bind ATP. Mg(2+) contacts are provided by Ser130 and Glu161. Asp173 functions as the Proton acceptor in the catalytic mechanism. Position 225 (Tyr225) interacts with substrate.

Belongs to the GHMP kinase family. GalK subfamily.

It is found in the cytoplasm. It catalyses the reaction alpha-D-galactose + ATP = alpha-D-galactose 1-phosphate + ADP + H(+). Its pathway is carbohydrate metabolism; galactose metabolism. Functionally, catalyzes the transfer of the gamma-phosphate of ATP to D-galactose to form alpha-D-galactose-1-phosphate (Gal-1-P). The polypeptide is Galactokinase (Streptomyces lividans).